The chain runs to 322 residues: MRIVVLAGGIGGARFLRGLKDALHHRAEQGESPSSITVIGNTGDDITLFGLRVCPDLDTVMYTLGGGINEEQGWGRADETFTVREELIAYGMHPQWFGLGDRDIATHIVRSQMLAAGYPLSAITEALCDRWKPGVRLLPMTDDQVETHVVVADEKGRRAIHFQEWWVRYRAQIPAESFVSVGADSAKPAPGVLSAIDEADFVLFPPSNPVVSIGSILGIPGIRDAVAAKTVVGVSPIIGGAPVRGMADACLRTIGVETSARAVAEHYGADLLDGWLVDEADADTVVAGVEVRAMPLYMSDPERTAAIAGAAVDLALELKERS.

D58 provides a ligand contact to 7,8-didemethyl-8-hydroxy-5-deazariboflavin.

Belongs to the CofD family. Homodimer. The cofactor is Mg(2+).

The catalysed reaction is enolpyruvoyl-2-diphospho-5'-guanosine + 7,8-didemethyl-8-hydroxy-5-deazariboflavin = dehydro coenzyme F420-0 + GMP + H(+). Its pathway is cofactor biosynthesis; coenzyme F420 biosynthesis. In terms of biological role, catalyzes the transfer of the phosphoenolpyruvate moiety from enoylpyruvoyl-2-diphospho-5'-guanosine (EPPG) to 7,8-didemethyl-8-hydroxy-5-deazariboflavin (FO) with the formation of dehydro coenzyme F420-0 and GMP. This chain is Phosphoenolpyruvate transferase, found in Thermobifida fusca (strain YX).